Here is a 248-residue protein sequence, read N- to C-terminus: Cytochrome c oxidase subunit 2 (248 aa).

Over M1–Q43 the chain is Mitochondrial intermembrane. The helical transmembrane segment at V44–G65 threads the bilayer. Residues K66–E79 lie on the Mitochondrial matrix side of the membrane. A helical transmembrane segment spans residues I80–K99. At L100 to E248 the chain is on the mitochondrial intermembrane side. 6 residues coordinate Cu cation: H180, C215, E217, C219, H223, and M226. Residue E217 coordinates Mg(2+).

The protein belongs to the cytochrome c oxidase subunit 2 family. In terms of assembly, component of the cytochrome c oxidase (complex IV, CIV), a multisubunit enzyme composed of a catalytic core of 3 subunits and several supernumerary subunits. The complex exists as a monomer or a dimer and forms supercomplexes (SCs) in the inner mitochondrial membrane with ubiquinol-cytochrome c oxidoreductase (cytochrome b-c1 complex, complex III, CIII). Cu cation is required as a cofactor.

It localises to the mitochondrion inner membrane. The enzyme catalyses 4 Fe(II)-[cytochrome c] + O2 + 8 H(+)(in) = 4 Fe(III)-[cytochrome c] + 2 H2O + 4 H(+)(out). Component of the cytochrome c oxidase, the last enzyme in the mitochondrial electron transport chain which drives oxidative phosphorylation. The respiratory chain contains 3 multisubunit complexes succinate dehydrogenase (complex II, CII), ubiquinol-cytochrome c oxidoreductase (cytochrome b-c1 complex, complex III, CIII) and cytochrome c oxidase (complex IV, CIV), that cooperate to transfer electrons derived from NADH and succinate to molecular oxygen, creating an electrochemical gradient over the inner membrane that drives transmembrane transport and the ATP synthase. Cytochrome c oxidase is the component of the respiratory chain that catalyzes the reduction of oxygen to water. Electrons originating from reduced cytochrome c in the intermembrane space (IMS) are transferred via the dinuclear copper A center (CU(A)) of subunit 2 and heme A of subunit 1 to the active site in subunit 1, a binuclear center (BNC) formed by heme A3 and copper B (CU(B)). The BNC reduces molecular oxygen to 2 water molecules using 4 electrons from cytochrome c in the IMS and 4 protons from the mitochondrial matrix. The polypeptide is Cytochrome c oxidase subunit 2 (COII) (Metridium senile (Brown sea anemone)).